Reading from the N-terminus, the 206-residue chain is Octanoyltransferase (206 aa).

Residues proline 30–isoleucine 206 enclose the BPL/LPL catalytic domain. Substrate-binding positions include arginine 69 to histidine 76, serine 137 to glycine 139, and glycine 150 to alanine 152. The active-site Acyl-thioester intermediate is cysteine 168.

The protein belongs to the LipB family.

It localises to the cytoplasm. It carries out the reaction octanoyl-[ACP] + L-lysyl-[protein] = N(6)-octanoyl-L-lysyl-[protein] + holo-[ACP] + H(+). It functions in the pathway protein modification; protein lipoylation via endogenous pathway; protein N(6)-(lipoyl)lysine from octanoyl-[acyl-carrier-protein]: step 1/2. Catalyzes the transfer of endogenously produced octanoic acid from octanoyl-acyl-carrier-protein onto the lipoyl domains of lipoate-dependent enzymes. Lipoyl-ACP can also act as a substrate although octanoyl-ACP is likely to be the physiological substrate. This is Octanoyltransferase from Francisella tularensis subsp. mediasiatica (strain FSC147).